Consider the following 67-residue polypeptide: Conotoxin Cl6.7 (67 aa).

Residues 1–24 (MKVTAVLMVAVLVLTACQLTTANT) form the signal peptide. A propeptide spanning residues 25–39 (TDYVRRIPARKSTMS) is cleaved from the precursor. 3 disulfides stabilise this stretch: C43–C58, C50–C62, and C57–C66.

This sequence belongs to the conotoxin O1 superfamily. As to expression, expressed by the venom duct.

It localises to the secreted. The chain is Conotoxin Cl6.7 from Californiconus californicus (California cone).